Reading from the N-terminus, the 80-residue chain is Small ribosomal subunit protein bS18c (80 aa).

The span at 1–19 shows a compositional bias: basic residues; that stretch reads MKKFISRPKRSSRRRKKTP. The segment at 1–24 is disordered; that stretch reads MKKFISRPKRSSRRRKKTPIKPGE.

The protein belongs to the bacterial ribosomal protein bS18 family. Part of the 30S ribosomal subunit.

It localises to the plastid. The protein localises to the chloroplast. This Staurastrum punctulatum (Green alga) protein is Small ribosomal subunit protein bS18c.